Here is a 148-residue protein sequence, read N- to C-terminus: Protein ORM1 (148 aa).

4 helical membrane passes run 12 to 32 (WIIH…FPGV), 36 to 56 (WSWT…FHLI), 89 to 109 (FLII…HYDL), and 111 to 131 (MFSW…LPVT).

The protein to yeast YLR350W C-terminus.

It localises to the membrane. This chain is Protein ORM1 (ORM1), found in Saccharomyces pastorianus (strain ATCC 76670 / Carlsberg bottom yeast no.2 / CBS 1503 / CLIB 180 / NBRC 10610 / NRRL Y-1525) (Saaz-type lager yeast).